Here is a 201-residue protein sequence, read N- to C-terminus: UPF0301 protein RHECIAT_CH0001061 (201 aa).

It belongs to the UPF0301 (AlgH) family.

The protein is UPF0301 protein RHECIAT_CH0001061 of Rhizobium etli (strain CIAT 652).